Reading from the N-terminus, the 111-residue chain is Small ribosomal subunit protein bS16 (111 aa).

The protein belongs to the bacterial ribosomal protein bS16 family.

This chain is Small ribosomal subunit protein bS16, found in Rickettsia africae (strain ESF-5).